A 351-amino-acid polypeptide reads, in one-letter code: Histidinol-phosphate aminotransferase 2 (351 aa).

Lysine 210 carries the N6-(pyridoxal phosphate)lysine modification.

It belongs to the class-II pyridoxal-phosphate-dependent aminotransferase family. Histidinol-phosphate aminotransferase subfamily. In terms of assembly, homodimer. The cofactor is pyridoxal 5'-phosphate.

It catalyses the reaction L-histidinol phosphate + 2-oxoglutarate = 3-(imidazol-4-yl)-2-oxopropyl phosphate + L-glutamate. Its pathway is amino-acid biosynthesis; L-histidine biosynthesis; L-histidine from 5-phospho-alpha-D-ribose 1-diphosphate: step 7/9. The polypeptide is Histidinol-phosphate aminotransferase 2 (hisC2) (Rhizobium meliloti (strain 1021) (Ensifer meliloti)).